The following is a 111-amino-acid chain: Probable 4-amino-4-deoxy-L-arabinose-phosphoundecaprenol flippase subunit ArnE (111 aa).

The next 3 helical transmembrane spans lie at 38-58, 61-81, and 91-111; these read LWLGLALICMGAAMVLWLLVL, LPVGIAYPMLSLNFVWVTLAA, and PRHWLGVALIISGIIILGSAA. Residues 40 to 109 form the EamA domain; sequence LGLALICMGA…IISGIIILGS (70 aa).

It belongs to the ArnE family. As to quaternary structure, heterodimer of ArnE and ArnF.

The protein localises to the cell inner membrane. Its pathway is bacterial outer membrane biogenesis; lipopolysaccharide biosynthesis. Functionally, translocates 4-amino-4-deoxy-L-arabinose-phosphoundecaprenol (alpha-L-Ara4N-phosphoundecaprenol) from the cytoplasmic to the periplasmic side of the inner membrane. This is Probable 4-amino-4-deoxy-L-arabinose-phosphoundecaprenol flippase subunit ArnE from Salmonella agona (strain SL483).